Here is a 416-residue protein sequence, read N- to C-terminus: Adipocyte plasma membrane-associated protein (416 aa).

The tract at residues 1 to 32 (MSEADGLRQRRPLRPQVVTDDDGQAPEAKDGS) is disordered. Serine 2 carries the N-acetylserine modification. At 2 to 40 (SEADGLRQRRPLRPQVVTDDDGQAPEAKDGSSFSGRVFR) the chain is on the cytoplasmic side. Threonine 19 is subject to Phosphothreonine. A helical; Signal-anchor for type II membrane protein transmembrane segment spans residues 41 to 61 (VTFLMLAVSLTVPLLGAMMLL). Over 62 to 416 (ESPIDPQPLS…FLCRLSLQAV (355 aa)) the chain is Extracellular. 2 N-linked (GlcNAc...) asparagine glycosylation sites follow: asparagine 160 and asparagine 196.

Belongs to the strictosidine synthase family. As to expression, liver, glomerular and tubular structures of the kidney, endothelial cells, arterial wall and pancreatic islets of Langerhans (at protein level). Found ubiquitously in adult as well as in embryonic tissues. In adult tissue, the highest expression is found in the liver, placenta and heart. Found on the cell surface of monocytes. In embryonic tissue, the highest expression levels is found in the liver and the kidney.

The protein resides in the membrane. In terms of biological role, exhibits strong arylesterase activity with beta-naphthyl acetate and phenyl acetate. May play a role in adipocyte differentiation. The sequence is that of Adipocyte plasma membrane-associated protein (APMAP) from Homo sapiens (Human).